A 106-amino-acid chain; its full sequence is Thioredoxin-like protein YdbP (106 aa).

The region spanning 1–106 (MKKITTNEQF…VTEFLSEHIS (106 aa)) is the Thioredoxin domain. C29 and C32 are oxidised to a cystine.

It belongs to the thioredoxin family.

Functionally, participates in various redox reactions through the reversible oxidation of its active center dithiol to a disulfide and catalyzes dithiol-disulfide exchange reactions. This is Thioredoxin-like protein YdbP (ydbP) from Bacillus subtilis (strain 168).